A 250-amino-acid chain; its full sequence is Pyridoxine 5'-phosphate synthase (250 aa).

3-amino-2-oxopropyl phosphate-binding residues include asparagine 8 and arginine 19. Histidine 44 acts as the Proton acceptor in catalysis. Arginine 46 and histidine 51 together coordinate 1-deoxy-D-xylulose 5-phosphate. Glutamate 76 acts as the Proton acceptor in catalysis. Threonine 106 is a binding site for 1-deoxy-D-xylulose 5-phosphate. The active-site Proton donor is histidine 200. Residues aspartate 201 and 223-224 (GH) each bind 3-amino-2-oxopropyl phosphate.

The protein belongs to the PNP synthase family. Homooctamer; tetramer of dimers.

It localises to the cytoplasm. It carries out the reaction 3-amino-2-oxopropyl phosphate + 1-deoxy-D-xylulose 5-phosphate = pyridoxine 5'-phosphate + phosphate + 2 H2O + H(+). It participates in cofactor biosynthesis; pyridoxine 5'-phosphate biosynthesis; pyridoxine 5'-phosphate from D-erythrose 4-phosphate: step 5/5. Functionally, catalyzes the complicated ring closure reaction between the two acyclic compounds 1-deoxy-D-xylulose-5-phosphate (DXP) and 3-amino-2-oxopropyl phosphate (1-amino-acetone-3-phosphate or AAP) to form pyridoxine 5'-phosphate (PNP) and inorganic phosphate. The chain is Pyridoxine 5'-phosphate synthase from Allorhizobium ampelinum (strain ATCC BAA-846 / DSM 112012 / S4) (Agrobacterium vitis (strain S4)).